Here is a 157-residue protein sequence, read N- to C-terminus: MQNKKSYRPNVAAVILSSKYPEKCEFFVAHRTDIRNAWQFPQGGIDEGETPEDALYRELLEEIGCNNVEILGEFPEWITYDFPKTARGKVYPFDGQTQKYFLVRLKEEAQINLQAFEIPEFKEYTFVKYDELFQKVTYFKRKVYRRVIDHFIKEGLI.

The Nudix hydrolase domain maps to 6–149; it reads SYRPNVAAVI…KRKVYRRVID (144 aa). Residues 43–64 carry the Nudix box motif; it reads GGIDEGETPEDALYRELLEEIG.

Belongs to the Nudix hydrolase family. RppH subfamily. It depends on a divalent metal cation as a cofactor.

Functionally, accelerates the degradation of transcripts by removing pyrophosphate from the 5'-end of triphosphorylated RNA, leading to a more labile monophosphorylated state that can stimulate subsequent ribonuclease cleavage. The sequence is that of RNA pyrophosphohydrolase from Sulfurovum sp. (strain NBC37-1).